The primary structure comprises 114 residues: Large ribosomal subunit protein bL19 (114 aa).

It belongs to the bacterial ribosomal protein bL19 family.

In terms of biological role, this protein is located at the 30S-50S ribosomal subunit interface and may play a role in the structure and function of the aminoacyl-tRNA binding site. In Lysinibacillus sphaericus (strain C3-41), this protein is Large ribosomal subunit protein bL19.